The primary structure comprises 329 residues: GTP 3',8-cyclase (329 aa).

In terms of domain architecture, Radical SAM core spans 8–234 (AFARKFYYLR…QLRQRSDGPA (227 aa)). Arg-17 provides a ligand contact to GTP. [4Fe-4S] cluster-binding residues include Cys-24 and Cys-28. Tyr-30 contacts S-adenosyl-L-methionine. Cys-31 is a [4Fe-4S] cluster binding site. Arg-68 contacts GTP. Gly-72 contacts S-adenosyl-L-methionine. A GTP-binding site is contributed by Thr-99. Position 123 (Ser-123) interacts with S-adenosyl-L-methionine. GTP is bound at residue Lys-160. Met-194 contacts S-adenosyl-L-methionine. [4Fe-4S] cluster-binding residues include Cys-257 and Cys-260. Position 262–264 (262–264 (RLR)) interacts with GTP. Cys-274 lines the [4Fe-4S] cluster pocket.

Belongs to the radical SAM superfamily. MoaA family. As to quaternary structure, monomer and homodimer. Requires [4Fe-4S] cluster as cofactor.

The enzyme catalyses GTP + AH2 + S-adenosyl-L-methionine = (8S)-3',8-cyclo-7,8-dihydroguanosine 5'-triphosphate + 5'-deoxyadenosine + L-methionine + A + H(+). It functions in the pathway cofactor biosynthesis; molybdopterin biosynthesis. Functionally, catalyzes the cyclization of GTP to (8S)-3',8-cyclo-7,8-dihydroguanosine 5'-triphosphate. The sequence is that of GTP 3',8-cyclase from Escherichia coli O139:H28 (strain E24377A / ETEC).